The sequence spans 546 residues: G1/S-specific cyclin CLN1 (546 aa).

Residues 224 to 265 form a disordered region; sequence SNGKEWSCKRKSQSSDDSDATVEEHISSSPQSTGLDGDTTTM.

Belongs to the cyclin family.

Essential for the control of the cell cycle at the G1/S (start) transition. Interacts with the CDC28 protein kinase to form MPF. The sequence is that of G1/S-specific cyclin CLN1 (CLN1) from Saccharomyces cerevisiae (strain ATCC 204508 / S288c) (Baker's yeast).